The following is a 319-amino-acid chain: tRNA-cytidine(32) 2-sulfurtransferase (319 aa).

Positions 45–50 (SGGKDS) match the PP-loop motif motif. 3 residues coordinate [4Fe-4S] cluster: C120, C123, and C211.

It belongs to the TtcA family. In terms of assembly, homodimer. The cofactor is Mg(2+). Requires [4Fe-4S] cluster as cofactor.

It localises to the cytoplasm. It catalyses the reaction cytidine(32) in tRNA + S-sulfanyl-L-cysteinyl-[cysteine desulfurase] + AH2 + ATP = 2-thiocytidine(32) in tRNA + L-cysteinyl-[cysteine desulfurase] + A + AMP + diphosphate + H(+). The protein operates within tRNA modification. Functionally, catalyzes the ATP-dependent 2-thiolation of cytidine in position 32 of tRNA, to form 2-thiocytidine (s(2)C32). The sulfur atoms are provided by the cysteine/cysteine desulfurase (IscS) system. This is tRNA-cytidine(32) 2-sulfurtransferase from Shewanella woodyi (strain ATCC 51908 / MS32).